The primary structure comprises 220 residues: Protein CREG1 (220 aa).

Residues 1-31 (MAARAPELARSLLAALLAPALVALLVSPASG) form the signal peptide. The interval 30–53 (SGRGGRDHGDWDVDRRLPPLPPRE) is disordered. Positions 33–53 (GGRDHGDWDVDRRLPPLPPRE) are enriched in basic and acidic residues. Asn-160 and Asn-216 each carry an N-linked (GlcNAc...) asparagine glycan.

This sequence belongs to the CREG family. Homodimer. Interacts with IGF2R; the interaction is dependent on glycosylation. In terms of processing, N-glycosylated. Widely expressed.

It is found in the secreted. Its function is as follows. May contribute to the transcriptional control of cell growth and differentiation. Antagonizes transcriptional activation and cellular transformation by the adenovirus E1A protein. The transcriptional control activity of cell growth requires interaction with IGF2R. The chain is Protein CREG1 (Creg1) from Mus musculus (Mouse).